A 159-amino-acid polypeptide reads, in one-letter code: Transcription elongation factor GreA (159 aa).

Residues M7 to N72 adopt a coiled-coil conformation.

It belongs to the GreA/GreB family.

In terms of biological role, necessary for efficient RNA polymerase transcription elongation past template-encoded arresting sites. The arresting sites in DNA have the property of trapping a certain fraction of elongating RNA polymerases that pass through, resulting in locked ternary complexes. Cleavage of the nascent transcript by cleavage factors such as GreA or GreB allows the resumption of elongation from the new 3'terminus. GreA releases sequences of 2 to 3 nucleotides. This is Transcription elongation factor GreA from Buchnera aphidicola subsp. Schizaphis graminum (strain Sg).